The following is a 565-amino-acid chain: Liver carboxylesterase 1 (565 aa).

The N-terminal stretch at 1–18 (MWLCALALASLAACTAWG) is a signal peptide. N-linked (GlcNAc...) asparagine glycosylation occurs at Asn-79. An intrachain disulfide couples Cys-87 to Cys-116. Residue Ser-221 is the Acyl-ester intermediate of the active site. Cys-273 and Cys-284 are oxidised to a cystine. Glu-353 (charge relay system) is an active-site residue. N-linked (GlcNAc...) asparagine glycosylation is present at Asn-389. His-467 functions as the Charge relay system in the catalytic mechanism. Residue Leu-565 is a short sequence motif, prevents secretion from ER.

The protein belongs to the type-B carboxylesterase/lipase family. In terms of assembly, monomer.

It is found in the endoplasmic reticulum lumen. It catalyses the reaction a carboxylic ester + H2O = an alcohol + a carboxylate + H(+). Involved in the detoxification of xenobiotics and in the activation of ester and amide prodrugs. This Oryctolagus cuniculus (Rabbit) protein is Liver carboxylesterase 1.